Here is a 505-residue protein sequence, read N- to C-terminus: Aspartyl/glutamyl-tRNA(Asn/Gln) amidotransferase subunit B (505 aa).

Belongs to the GatB/GatE family. GatB subfamily. Heterotrimer of A, B and C subunits.

The enzyme catalyses L-glutamyl-tRNA(Gln) + L-glutamine + ATP + H2O = L-glutaminyl-tRNA(Gln) + L-glutamate + ADP + phosphate + H(+). It carries out the reaction L-aspartyl-tRNA(Asn) + L-glutamine + ATP + H2O = L-asparaginyl-tRNA(Asn) + L-glutamate + ADP + phosphate + 2 H(+). Functionally, allows the formation of correctly charged Asn-tRNA(Asn) or Gln-tRNA(Gln) through the transamidation of misacylated Asp-tRNA(Asn) or Glu-tRNA(Gln) in organisms which lack either or both of asparaginyl-tRNA or glutaminyl-tRNA synthetases. The reaction takes place in the presence of glutamine and ATP through an activated phospho-Asp-tRNA(Asn) or phospho-Glu-tRNA(Gln). The chain is Aspartyl/glutamyl-tRNA(Asn/Gln) amidotransferase subunit B from Haloarcula marismortui (strain ATCC 43049 / DSM 3752 / JCM 8966 / VKM B-1809) (Halobacterium marismortui).